The sequence spans 625 residues: Protein arginine N-methyltransferase skb1 (625 aa).

Positions 280–588 (LQVPLQPLSY…WRLTDGMRVW (309 aa)) constitute an SAM-dependent MTase PRMT-type domain. S-adenosyl-L-methionine is bound by residues Tyr-296, 305-306 (KY), Glu-359, and 386-387 (DM). Active-site proton donor/acceptor residues include Glu-402 and Glu-411.

It belongs to the class I-like SAM-binding methyltransferase superfamily. Protein arginine N-methyltransferase family. As to quaternary structure, interacts with the N-terminal regulatory domain of shk1. Shk1, cdc42 and skb1 are able to form a ternary complex in vivo. Interacts with orb6. Interacts with Cdr1 and the Cdr1 inhibitory target Wee1.

It is found in the nucleus. The protein localises to the cell tip. The protein resides in the cell septum. Its subcellular location is the cytoplasm. It localises to the cell cortex. S-adenosyl-L-methionine-dependent protein-arginine N-methyltransferase that can catalyze both the mono- and symmetric (type II) dimethylation of the guanidino nitrogens of arginine residues in target proteins. Delays mitotic entry by inhibiting the Cdr1-Wee1 signaling pathway. Cortical nodes sequester Skb1 from its regulatory targets Cdr1 and Wee1. Positively modulates the shk1 kinase function. May be a mediator of hyperosmotic stress response. Involved in the control of cell polarity by regulating the subcellular localization of Orb6 kinase. This Schizosaccharomyces pombe (strain 972 / ATCC 24843) (Fission yeast) protein is Protein arginine N-methyltransferase skb1.